The chain runs to 297 residues: MEFDFDVHKIFLEPITKLDSSLIPSRRPLIASSEAQKQIMTVIDEIGKASAKAQRLPAPITSASRMQTNKHHLYILKDCTPKTAGRGAVIGFLKVGCKKLFVLDQKGSHIEAEPLCILDFYIHETLQRHGFGKELFTFMLKNEQVDVHHLAIDRPSEKFLSFLRKHFNLWSTIPQVNNFVVFDGFFRDWKASVKKTPAKRTEGEIKPYSLTDRDFLKQEEGLPWPFSQSQLNLNRASSLGSSPTRACSRHSPGEEDFVKSLRNCRPHSLHRTANSEQEDHSQRRRTSSLNRPQSIHH.

An N-acetyltransferase domain is found at 1 to 186 (MEFDFDVHKI…NNFVVFDGFF (186 aa)). Residues 120 to 133 (FYIHETLQRHGFGK) and 156 to 165 (SEKFLSFLRK) each bind acetyl-CoA. The disordered stretch occupies residues 269-297 (LHRTANSEQEDHSQRRRTSSLNRPQSIHH). Residues 287–297 (SSLNRPQSIHH) are compositionally biased toward polar residues.

This sequence belongs to the acetyltransferase ATAT1 family.

Its subcellular location is the cytoplasm. It localises to the membrane. The protein resides in the clathrin-coated pit. It is found in the cell junction. The protein localises to the focal adhesion. Its subcellular location is the cell projection. It localises to the axon. The protein resides in the cytoskeleton. It is found in the spindle. It catalyses the reaction L-lysyl-[alpha-tubulin] + acetyl-CoA = N(6)-acetyl-L-lysyl-[alpha-tubulin] + CoA + H(+). Functionally, specifically acetylates 'Lys-40' in alpha-tubulin on the lumenal side of microtubules. Promotes microtubule destabilization and accelerates microtubule dynamics; this activity may be independent of acetylation activity. Acetylates alpha-tubulin with a slow enzymatic rate, due to a catalytic site that is not optimized for acetyl transfer. Enters the microtubule through each end and diffuses quickly throughout the lumen of microtubules. Acetylates only long/old microtubules because of its slow acetylation rate since it does not have time to act on dynamically unstable microtubules before the enzyme is released. May be involved in neuron development. The chain is Alpha-tubulin N-acetyltransferase 1 from Xenopus tropicalis (Western clawed frog).